A 206-amino-acid chain; its full sequence is Apoptosis regulator OPG045 (206 aa).

It belongs to the orthopoxvirus OPG045 family. As to quaternary structure, homodimer. Interacts with host pro-apoptotic protein BCL2L11 (via BH3 domain). Interacts with host NLRP1. Interacts with host BAK.

It localises to the host mitochondrion outer membrane. The protein localises to the host cytoplasm. Functionally, plays a role in evading host innate immune response by inhibiting host inflammasome activation. Interacts with and inhibits NLR-mediated interleukin-1 beta/IL1B production in infected cells. At the host mitochondria outer membrane, interacts with the BH3 domain of host BAK and prevents BAK from binding active BAX. In turn, host apoptosis is inhibited. This is Apoptosis regulator OPG045 (OPG045) from Vaccinia virus (strain L-IVP) (VACV).